The following is a 151-amino-acid chain: 18 kDa heat shock protein (151 aa).

In terms of domain architecture, sHSP spans 38–151 (TFNGNAGFKV…KDNGRRIDIH (114 aa)).

This sequence belongs to the small heat shock protein (HSP20) family.

In terms of biological role, probable chaperone. This is 18 kDa heat shock protein (hsp18) from Clostridium acetobutylicum (strain ATCC 824 / DSM 792 / JCM 1419 / IAM 19013 / LMG 5710 / NBRC 13948 / NRRL B-527 / VKM B-1787 / 2291 / W).